A 152-amino-acid polypeptide reads, in one-letter code: Xanthine-guanine phosphoribosyltransferase (152 aa).

5-phospho-alpha-D-ribose 1-diphosphate is bound by residues 37–38, Arg-69, and 88–96; these read RG and DDLVDTGGT. Arg-69 provides a ligand contact to GMP. Asp-89 contacts Mg(2+). Residues Asp-92 and Ile-135 each contribute to the guanine site. Positions 92 and 135 each coordinate xanthine. GMP-binding positions include 92–96 and 134–135; these read DTGGT and WI.

The protein belongs to the purine/pyrimidine phosphoribosyltransferase family. XGPT subfamily. Homotetramer. Mg(2+) is required as a cofactor.

The protein localises to the cell inner membrane. It catalyses the reaction GMP + diphosphate = guanine + 5-phospho-alpha-D-ribose 1-diphosphate. It carries out the reaction XMP + diphosphate = xanthine + 5-phospho-alpha-D-ribose 1-diphosphate. The enzyme catalyses IMP + diphosphate = hypoxanthine + 5-phospho-alpha-D-ribose 1-diphosphate. The protein operates within purine metabolism; GMP biosynthesis via salvage pathway; GMP from guanine: step 1/1. Its pathway is purine metabolism; XMP biosynthesis via salvage pathway; XMP from xanthine: step 1/1. In terms of biological role, purine salvage pathway enzyme that catalyzes the transfer of the ribosyl-5-phosphate group from 5-phospho-alpha-D-ribose 1-diphosphate (PRPP) to the N9 position of the 6-oxopurines guanine and xanthine to form the corresponding ribonucleotides GMP (guanosine 5'-monophosphate) and XMP (xanthosine 5'-monophosphate), with the release of PPi. To a lesser extent, also acts on hypoxanthine. In Escherichia coli O7:K1 (strain IAI39 / ExPEC), this protein is Xanthine-guanine phosphoribosyltransferase.